The primary structure comprises 179 residues: ATP-dependent protease subunit HslV (179 aa).

Thr-5 is an active-site residue. Na(+)-binding residues include Gly-164, Cys-167, and Thr-170.

Belongs to the peptidase T1B family. HslV subfamily. In terms of assembly, a double ring-shaped homohexamer of HslV is capped on each side by a ring-shaped HslU homohexamer. The assembly of the HslU/HslV complex is dependent on binding of ATP.

The protein localises to the cytoplasm. It carries out the reaction ATP-dependent cleavage of peptide bonds with broad specificity.. Allosterically activated by HslU binding. In terms of biological role, protease subunit of a proteasome-like degradation complex believed to be a general protein degrading machinery. This chain is ATP-dependent protease subunit HslV, found in Verminephrobacter eiseniae (strain EF01-2).